Reading from the N-terminus, the 404-residue chain is UPF0261 protein CTC_01794 (404 aa).

It belongs to the UPF0261 family.

The sequence is that of UPF0261 protein CTC_01794 from Clostridium tetani (strain Massachusetts / E88).